The chain runs to 204 residues: Lipoprotein signal peptidase (204 aa).

A disordered region spans residues 1 to 42 (MAEAERIIGTPDIPDAAGEGQERPDADPEREQQEQEQAPERT). The span at 20–42 (GQERPDADPEREQQEQEQAPERT) shows a compositional bias: basic and acidic residues. The next 3 membrane-spanning stretches (helical) occupy residues 50–70 (VLFA…MLVV), 100–120 (FGEA…VVIA), and 126–146 (LHSL…LGNL). Active-site residues include Asp163 and Asp177. Residues 170-190 (FAVFNLADSAIVCGGILIVIL) form a helical membrane-spanning segment.

This sequence belongs to the peptidase A8 family.

Its subcellular location is the cell membrane. It catalyses the reaction Release of signal peptides from bacterial membrane prolipoproteins. Hydrolyzes -Xaa-Yaa-Zaa-|-(S,diacylglyceryl)Cys-, in which Xaa is hydrophobic (preferably Leu), and Yaa (Ala or Ser) and Zaa (Gly or Ala) have small, neutral side chains.. It functions in the pathway protein modification; lipoprotein biosynthesis (signal peptide cleavage). Its function is as follows. This protein specifically catalyzes the removal of signal peptides from prolipoproteins. The sequence is that of Lipoprotein signal peptidase from Streptomyces coelicolor (strain ATCC BAA-471 / A3(2) / M145).